Here is a 102-residue protein sequence, read N- to C-terminus: Small ribosomal subunit protein uS10 (102 aa).

Belongs to the universal ribosomal protein uS10 family. As to quaternary structure, part of the 30S ribosomal subunit.

Involved in the binding of tRNA to the ribosomes. This Oceanobacillus iheyensis (strain DSM 14371 / CIP 107618 / JCM 11309 / KCTC 3954 / HTE831) protein is Small ribosomal subunit protein uS10.